The sequence spans 200 residues: Probable GTP-binding protein EngB (200 aa).

In terms of domain architecture, EngB-type G spans 26 to 200 (SIPEIAIAGR…IYEIAQCIKK (175 aa)). GTP contacts are provided by residues 34 to 41 (GRSNVGKS), 61 to 65 (GCTKQ), 80 to 83 (DLPG), 147 to 150 (TKID), and 176 to 179 (VISA). Mg(2+)-binding residues include Ser41 and Thr63.

It belongs to the TRAFAC class TrmE-Era-EngA-EngB-Septin-like GTPase superfamily. EngB GTPase family. Mg(2+) is required as a cofactor.

Its function is as follows. Necessary for normal cell division and for the maintenance of normal septation. This is Probable GTP-binding protein EngB from Ehrlichia canis (strain Jake).